A 295-amino-acid chain; its full sequence is Small ribosomal subunit biogenesis GTPase RsgA (295 aa).

Residues 68-228 enclose the CP-type G domain; it reads KNLLTKPHVA…VVDTPGFANL (161 aa). GTP contacts are provided by residues 117–120 and 170–178; these read NKMD and GLSGVGKSS. Zn(2+) is bound by residues Cys-250, Cys-255, His-257, and Cys-263.

This sequence belongs to the TRAFAC class YlqF/YawG GTPase family. RsgA subfamily. Monomer. Associates with 30S ribosomal subunit, binds 16S rRNA. Zn(2+) serves as cofactor.

It is found in the cytoplasm. In terms of biological role, one of several proteins that assist in the late maturation steps of the functional core of the 30S ribosomal subunit. Helps release RbfA from mature subunits. May play a role in the assembly of ribosomal proteins into the subunit. Circularly permuted GTPase that catalyzes slow GTP hydrolysis, GTPase activity is stimulated by the 30S ribosomal subunit. This chain is Small ribosomal subunit biogenesis GTPase RsgA, found in Thermotoga petrophila (strain ATCC BAA-488 / DSM 13995 / JCM 10881 / RKU-1).